Here is a 336-residue protein sequence, read N- to C-terminus: Type II methyltransferase M2.HphI (336 aa).

It belongs to the N(4)/N(6)-methyltransferase family.

It catalyses the reaction a 2'-deoxyadenosine in DNA + S-adenosyl-L-methionine = an N(6)-methyl-2'-deoxyadenosine in DNA + S-adenosyl-L-homocysteine + H(+). Functionally, an alpha subtype methylase that recognizes the double-stranded sequence 5'-GGTGA-3', probably methylates A-5 on the top strand, and protects the DNA from cleavage by the HphI endonuclease. The chain is Type II methyltransferase M2.HphI (hphIBM) from Haemophilus parahaemolyticus.